The primary structure comprises 340 residues: Glyceraldehyde-3-phosphate dehydrogenase (340 aa).

Residues 11 to 12 (SI) and G111 each bind NAD(+). Position 140 to 142 (140 to 142 (SCN)) interacts with D-glyceraldehyde 3-phosphate. Residue C141 is the Nucleophile of the active site. R169 provides a ligand contact to NAD(+). A D-glyceraldehyde 3-phosphate-binding site is contributed by 195–196 (HG). Q303 contacts NAD(+).

This sequence belongs to the glyceraldehyde-3-phosphate dehydrogenase family. In terms of assembly, homotetramer.

The protein localises to the cytoplasm. The catalysed reaction is D-glyceraldehyde 3-phosphate + phosphate + NADP(+) = (2R)-3-phospho-glyceroyl phosphate + NADPH + H(+). It carries out the reaction D-glyceraldehyde 3-phosphate + phosphate + NAD(+) = (2R)-3-phospho-glyceroyl phosphate + NADH + H(+). It participates in carbohydrate degradation; glycolysis; pyruvate from D-glyceraldehyde 3-phosphate: step 1/5. The protein is Glyceraldehyde-3-phosphate dehydrogenase of Methanococcus maripaludis (strain DSM 14266 / JCM 13030 / NBRC 101832 / S2 / LL).